A 236-amino-acid polypeptide reads, in one-letter code: MEPYSEDSILALTEKVFKISGYRFQDHELLKTAVTHPSIAAERYASYERLEFLGDAVLGLVVSEMLYTLFPDDSEGLLTKKRIALVRGSKVVEIAQSLNLGNILLMSKGELTSGGISNNSNLENALEALIGAIYVDGGLESVRHFILQHWKPLATNLADTPLQDAKTALQEWAQGHNFAIPSYRLINKSGLEHAPVFTVEVTVNGQRVHATGCKKKYAEIAAAKLMLEKVTKQNDP.

The 126-residue stretch at 13–138 (TEKVFKISGY…LIGAIYVDGG (126 aa)) folds into the RNase III domain. A Mg(2+)-binding site is contributed by Glu51. Asp55 is an active-site residue. Mg(2+) is bound by residues Asn124 and Glu127. Glu127 is a catalytic residue. Positions 164–232 (DAKTALQEWA…AKLMLEKVTK (69 aa)) constitute a DRBM domain.

It belongs to the ribonuclease III family. In terms of assembly, homodimer. It depends on Mg(2+) as a cofactor.

The protein localises to the cytoplasm. It catalyses the reaction Endonucleolytic cleavage to 5'-phosphomonoester.. Digests double-stranded RNA. Involved in the processing of primary rRNA transcript to yield the immediate precursors to the large and small rRNAs (23S and 16S). Processes some mRNAs, and tRNAs when they are encoded in the rRNA operon. Processes pre-crRNA and tracrRNA of type II CRISPR loci if present in the organism. This Anaplasma phagocytophilum (strain HZ) protein is Ribonuclease 3.